The following is a 345-amino-acid chain: MLHSNIYSLQTEATNKILSTSSLEELESLRLYYFGKSGVITACLRSISTINNIEERKSIGSAVNSICAELKSLMNSQKEKLHKIQIDAQLMEDKIDISLPVRPKQIAKLHPISKTLHEVKHIFVSLGFKLSDGPELEDEFHVFDALNTHKHHPAREENDTFYLKKLVNNKRIVLRTHTSSVQIRTMESNNGNYPIKIIAPGKVYRNDWDATHSPMFHQIEGLYIDKNINMGHLKYCINYFLKKFFGENIQIRFRNSYFPFTEPSAEVDIKCSQKNWMEILGCGMVHHNVLTNVNINPEQYSGFAFGIGIERIAMIKYNINDLRKFYSNKLQWLTHHGFCFTNLIT.

Glutamate 262 serves as a coordination point for Mg(2+).

This sequence belongs to the class-II aminoacyl-tRNA synthetase family. Phe-tRNA synthetase alpha subunit type 1 subfamily. Tetramer of two alpha and two beta subunits. Mg(2+) is required as a cofactor.

The protein localises to the cytoplasm. The enzyme catalyses tRNA(Phe) + L-phenylalanine + ATP = L-phenylalanyl-tRNA(Phe) + AMP + diphosphate + H(+). In Ehrlichia canis (strain Jake), this protein is Phenylalanine--tRNA ligase alpha subunit.